Consider the following 167-residue polypeptide: Iron-sulfur cluster assembly enzyme ISCU (167 aa).

A mitochondrion-targeting transit peptide spans 1–34 (MAAAGAFRLRRAASALLLRSPRLPARELSAPARL). Serine 14 bears the Phosphoserine; by MTOR mark. Zn(2+) is bound at residue proline 46. Cysteine 69 serves as the catalytic Cysteine persulfide intermediate. Position 69 is a cysteine persulfide (cysteine 69). Glycine 70, aspartate 71, cysteine 95, lysine 112, and cysteine 138 together coordinate Zn(2+). Cysteine 138 serves as the catalytic Cysteine persulfide intermediate. The residue at position 138 (cysteine 138) is a Cysteine persulfide.

It belongs to the NifU family. As to quaternary structure, homodimer; Tyr-35-mediated dimerization of two iron- and sulfide-containing ISCU subunit bind to the cysteine desulfurase complex. Component of the mitochondrial core iron-sulfur cluster (ISC) complex composed of NFS1, LYRM4, NDUFAB1, ISCU, FXN, and FDX2; this complex is an heterohexamer containing two copies of each monomer. Interacts (D-state) with NFS1 (homodimer form); each monomer interacts with the C-terminal regions of each NFS1 monomer. Interacts (monomer form) with FXN (via ferrous form); the interaction is possible when both are bound to the dimeric form of the cysteine desulfurase complex (NFS1:LYRM4) and enhances FXN interaction to the dimeric form of the cysteine desulfurase complex (NFS1:LYRM4). Interacts with GLRX5. Interacts (D-state) with HSPA9. Interacts (S-state) with HSCB; this interaction stimulates the ATPase activity of HSPA9. In terms of assembly, component of the cytoplasmic core iron-sulfur cluster (ISC) complex composed at least of NFS1, LYRM4, and ISCU; this complex interacts with FXN. Monomer; each monomer binds to the C-terminal regions of NFS1 (cytoplasmic and homodimer form). Interacts with NFS1 (cytoplasmic and homodimer form); this interaction promotes de novo iron-sulfur cluster formation. Interacts with HSCB (cytoplasmic form); this interaction stabilizes the (Fe-S) clusters on ISCU. Post-translationally, phosphorylation at Ser-14 is required for ISCU protein stabilization in the cytosol, whereas dephosphorylation of Ser-14, due to the inhibition of mTORC1 (mammalian target of rapamycin complex 1) complex, leads to degradation of the precursor form and ultimately to a decrease in the mitochondrial mature form. Cysteine persulfide is reduced by thiol-containing molecules such as glutathione and L-cysteine. In terms of tissue distribution, detected in heart, liver, skeletal muscle, brain, pancreas, kidney, lung and placenta.

It is found in the mitochondrion. The protein localises to the cytoplasm. Its subcellular location is the nucleus. Mitochondrial scaffold protein, of the core iron-sulfur cluster (ISC) assembly complex, that provides the structural architecture on which the [2Fe-2S] clusters are assembled. The core iron-sulfur cluster (ISC) assembly complex is involved in the de novo synthesis of a [2Fe-2S] cluster, the first step of the mitochondrial iron-sulfur protein biogenesis. This process is initiated by the cysteine desulfurase complex (NFS1:LYRM4:NDUFAB1) that produces persulfide which is delivered on the scaffold protein ISCU in a FXN-dependent manner. Then this complex is stabilized by FDX2 which provides reducing equivalents to accomplish the [2Fe-2S] cluster assembly. Finally, the [2Fe-2S] cluster is transferred from ISCU to chaperone proteins, including HSCB, HSPA9 and GLRX5. Exists as two slow interchanging conformational states, a structured (S) and disordered (D) form. May modulate NFS1 desulfurase activity in a zinc-dependent manner. Modulates the interaction between FXN and the cysteine desulfurase complex. Its function is as follows. Cytoplasmic scaffold protein, of the cytoplasmic core iron-sulfur cluster (ISC) assembly complex that provides the structural architecture on which the Fe-S clusters are assembled and may be involved in the cytoplasmic iron-sulfur protein biogenesis. The chain is Iron-sulfur cluster assembly enzyme ISCU from Homo sapiens (Human).